The sequence spans 227 residues: NAD(P)H-quinone oxidoreductase subunit K, chloroplastic (227 aa).

Positions 43, 44, 108, and 139 each coordinate [4Fe-4S] cluster.

Belongs to the complex I 20 kDa subunit family. As to quaternary structure, NDH is composed of at least 16 different subunits, 5 of which are encoded in the nucleus. It depends on [4Fe-4S] cluster as a cofactor.

The protein localises to the plastid. It localises to the chloroplast thylakoid membrane. The enzyme catalyses a plastoquinone + NADH + (n+1) H(+)(in) = a plastoquinol + NAD(+) + n H(+)(out). The catalysed reaction is a plastoquinone + NADPH + (n+1) H(+)(in) = a plastoquinol + NADP(+) + n H(+)(out). In terms of biological role, NDH shuttles electrons from NAD(P)H:plastoquinone, via FMN and iron-sulfur (Fe-S) centers, to quinones in the photosynthetic chain and possibly in a chloroplast respiratory chain. The immediate electron acceptor for the enzyme in this species is believed to be plastoquinone. Couples the redox reaction to proton translocation, and thus conserves the redox energy in a proton gradient. The chain is NAD(P)H-quinone oxidoreductase subunit K, chloroplastic from Spinacia oleracea (Spinach).